Consider the following 448-residue polypeptide: Ribosome biogenesis protein YTM1 (448 aa).

Positions 5–86 (TSNQAVVFST…EETLEIEYIE (82 aa)) are ubiquitin-like (UBL) domain. WD repeat units lie at residues 98 to 136 (PHES…TLDA), 191 to 230 (LHTA…KHEV), 271 to 309 (SHIG…CTRT), 312 to 351 (ASEK…ALSA), 357 to 397 (LHPA…AAIS), and 403 to 439 (DGTK…ETQG). The tract at residues 225 to 261 (PPKHEVPEPTITAADQRTKKRRKVDPSSGDSSSPTAI) is disordered.

This sequence belongs to the WD repeat WDR12/YTM1 family. As to quaternary structure, component of the NOP7 complex, composed of ERB1, NOP7 and YTM1. The complex is held together by ERB1, which interacts with NOP7 via its N-terminal domain and with YTM1 via a high-affinity interaction between the seven-bladed beta-propeller domains of the 2 proteins. The NOP7 complex associates with the 66S pre-ribosome. Interacts (via UBL domain) with MDN1 (via VWFA/MIDAS domain).

It localises to the nucleus. The protein resides in the nucleolus. The protein localises to the nucleoplasm. Functionally, component of the NOP7 complex, which is required for maturation of the 25S and 5.8S ribosomal RNAs and formation of the 60S ribosome. The sequence is that of Ribosome biogenesis protein YTM1 from Coprinopsis cinerea (strain Okayama-7 / 130 / ATCC MYA-4618 / FGSC 9003) (Inky cap fungus).